The chain runs to 951 residues: Valine--tRNA ligase (951 aa).

The 'HIGH' region signature appears at P42–H52. The 'KMSKS' region motif lies at K554–S558. Residue K557 participates in ATP binding. Residues A880–Q944 are a coiled coil.

It belongs to the class-I aminoacyl-tRNA synthetase family. ValS type 1 subfamily. In terms of assembly, monomer.

The protein localises to the cytoplasm. It carries out the reaction tRNA(Val) + L-valine + ATP = L-valyl-tRNA(Val) + AMP + diphosphate. Its function is as follows. Catalyzes the attachment of valine to tRNA(Val). As ValRS can inadvertently accommodate and process structurally similar amino acids such as threonine, to avoid such errors, it has a 'posttransfer' editing activity that hydrolyzes mischarged Thr-tRNA(Val) in a tRNA-dependent manner. This is Valine--tRNA ligase from Escherichia coli O6:H1 (strain CFT073 / ATCC 700928 / UPEC).